Reading from the N-terminus, the 506-residue chain is Putative basic amino acid antiporter YfcC (506 aa).

A run of 13 helical transmembrane segments spans residues 19–39 (LVII…VPVG), 107–127 (GTAV…GIVM), 148–168 (ILFI…FGMG), 171–191 (AVAF…DSIT), 208–228 (WMNP…VLSG), 231–251 (LRIV…MVYA), 287–307 (WLVL…VIVN), 310–330 (FIPE…IIGV), 352–372 (MMIA…LVGN), 398–418 (AVAA…VTSG), 419–439 (SGQA…VGVN), 442–462 (VTVL…PTSA), and 485–505 (LLGL…LMGY).

It to H.influenzae HI_0594. To B.subtilis YcgA.

It localises to the cell inner membrane. Its function is as follows. Metabolomic profiling of different yfcC over-expression and deletion strains suggests that it may affect the glyoxylate shunt. This is Putative basic amino acid antiporter YfcC (yfcC) from Escherichia coli (strain K12).